Here is a 346-residue protein sequence, read N- to C-terminus: Isopentenyl-diphosphate delta-isomerase (346 aa).

Position 12–13 (12–13) interacts with substrate; that stretch reads RK. FMN-binding positions include 67–69, Ser-97, and Asn-126; that span reads ALT. Residue 97 to 99 participates in substrate binding; the sequence is SQR. Gln-156 provides a ligand contact to substrate. Mg(2+) is bound at residue Glu-157. FMN contacts are provided by residues Lys-188, Thr-218, 263–265, and 284–285; these read GIR and AG.

The protein belongs to the IPP isomerase type 2 family. As to quaternary structure, homooctamer. Dimer of tetramers. FMN serves as cofactor. NADPH is required as a cofactor. The cofactor is Mg(2+).

Its subcellular location is the cytoplasm. The catalysed reaction is isopentenyl diphosphate = dimethylallyl diphosphate. In terms of biological role, involved in the biosynthesis of isoprenoids. Catalyzes the 1,3-allylic rearrangement of the homoallylic substrate isopentenyl (IPP) to its allylic isomer, dimethylallyl diphosphate (DMAPP). This chain is Isopentenyl-diphosphate delta-isomerase, found in Moorella thermoacetica (strain ATCC 39073 / JCM 9320).